Here is a 122-residue protein sequence, read N- to C-terminus: Large ribosomal subunit protein bL12 (122 aa).

The protein belongs to the bacterial ribosomal protein bL12 family. As to quaternary structure, homodimer. Part of the ribosomal stalk of the 50S ribosomal subunit. Forms a multimeric L10(L12)X complex, where L10 forms an elongated spine to which 2 to 4 L12 dimers bind in a sequential fashion. Binds GTP-bound translation factors.

Functionally, forms part of the ribosomal stalk which helps the ribosome interact with GTP-bound translation factors. Is thus essential for accurate translation. In Vibrio vulnificus (strain CMCP6), this protein is Large ribosomal subunit protein bL12.